Reading from the N-terminus, the 60-residue chain is Conotoxin Cl1.1 (60 aa).

The first 19 residues, 1–19, serve as a signal peptide directing secretion; the sequence is MRCLPVIVILLLLISSAAA. Positions 20–48 are excised as a propeptide; it reads VVEGPLRVNRRLRPRKAPVDMQARDWNWG.

Belongs to the conotoxin T superfamily. In terms of processing, contains 2 disulfide bonds. In terms of tissue distribution, expressed by the venom duct.

It localises to the secreted. This Californiconus californicus (California cone) protein is Conotoxin Cl1.1.